Here is a 149-residue protein sequence, read N- to C-terminus: MHCPFCCAVDTKVIDSRLVGEGSSVRRRRQCVVCHERFTTFEVAELVMPRVVKSNDVREPFNEDKLRSGLMKALEKRPVSSDAVENAISHIKSKLRATGEREVASKSIGSLVMDELKKLDKVAYIRFASVYRSFEDIREFGEEIARLQD.

The segment at 3–34 (CPFCCAVDTKVIDSRLVGEGSSVRRRRQCVVC) is a zinc-finger region. The region spanning 49–139 (PRVVKSNDVR…VYRSFEDIRE (91 aa)) is the ATP-cone domain.

Belongs to the NrdR family. The cofactor is Zn(2+).

Its function is as follows. Negatively regulates transcription of bacterial ribonucleotide reductase nrd genes and operons by binding to NrdR-boxes. This Erwinia tasmaniensis (strain DSM 17950 / CFBP 7177 / CIP 109463 / NCPPB 4357 / Et1/99) protein is Transcriptional repressor NrdR.